The chain runs to 267 residues: 2-keto-3-deoxy-L-rhamnonate aldolase (267 aa).

His49 serves as the catalytic Proton acceptor. Gln151 serves as a coordination point for substrate. Glu153 serves as a coordination point for Mg(2+). Residues Ala178 and Asp179 each coordinate substrate. A Mg(2+)-binding site is contributed by Asp179.

It belongs to the HpcH/HpaI aldolase family. KDR aldolase subfamily. Homohexamer. It depends on Mg(2+) as a cofactor.

The catalysed reaction is 2-dehydro-3-deoxy-L-rhamnonate = (S)-lactaldehyde + pyruvate. Catalyzes the reversible retro-aldol cleavage of 2-keto-3-deoxy-L-rhamnonate (KDR) to pyruvate and lactaldehyde. The protein is 2-keto-3-deoxy-L-rhamnonate aldolase of Escherichia coli O157:H7.